A 264-amino-acid chain; its full sequence is tRNA (guanine-N(1)-)-methyltransferase (264 aa).

S-adenosyl-L-methionine-binding positions include glycine 125 and 145–150 (LGDFVL).

This sequence belongs to the RNA methyltransferase TrmD family. In terms of assembly, homodimer.

The protein resides in the cytoplasm. It carries out the reaction guanosine(37) in tRNA + S-adenosyl-L-methionine = N(1)-methylguanosine(37) in tRNA + S-adenosyl-L-homocysteine + H(+). Functionally, specifically methylates guanosine-37 in various tRNAs. The chain is tRNA (guanine-N(1)-)-methyltransferase from Burkholderia multivorans (strain ATCC 17616 / 249).